The chain runs to 165 residues: NADPH-dependent 7-cyano-7-deazaguanine reductase (165 aa).

The active-site Thioimide intermediate is the Cys56. Asp63 serves as the catalytic Proton donor. Residues 78–80 (VES) and 97–98 (HE) each bind substrate.

The protein belongs to the GTP cyclohydrolase I family. QueF type 1 subfamily.

The protein resides in the cytoplasm. It carries out the reaction 7-aminomethyl-7-carbaguanine + 2 NADP(+) = 7-cyano-7-deazaguanine + 2 NADPH + 3 H(+). It functions in the pathway tRNA modification; tRNA-queuosine biosynthesis. Catalyzes the NADPH-dependent reduction of 7-cyano-7-deazaguanine (preQ0) to 7-aminomethyl-7-deazaguanine (preQ1). In Bacillus mycoides (strain KBAB4) (Bacillus weihenstephanensis), this protein is NADPH-dependent 7-cyano-7-deazaguanine reductase.